The following is a 663-amino-acid chain: Protein MICRORCHIDIA 6 (663 aa).

The segment at 1 to 77 is disordered; it reads MSHDRSVNVS…PADDAGVTSS (77 aa). The segment covering 49–62 has biased composition (polar residues); sequence SVGQSAGQSSTSVV. The Nuclear localization signal motif lies at 552-559; that stretch reads KRKEHPDS. The stretch at 614-659 forms a coiled coil; the sequence is DRKVRSQNLEVKAMNLRSELENYKSEYERLMVELQALDLVKDEHRR.

The protein belongs to the MORC ATPase protein family. As to quaternary structure, homodimer and heterodimers with MORC1/CRT1 and MORC2. Interacts directly with SUVH9. Component of an RNA-directed DNA methylation (RdDM) complex that contains at least MORC6, MORC1/CRT1, MORC2, SWI3D and SUVH9. Stimulated by interaction with DMS3. Interacts with IDN2, SWI3B, SWI3C and SWI3D. Requires Mg(2+) as cofactor. Mn(2+) is required as a cofactor.

The protein resides in the nucleus. With respect to regulation, stimulated by DMS3. Involved in RNA-directed DNA methylation (RdDM) as a component of the RdDM machinery and required for gene silencing. Together with SUVH2 and SUVH9, regulates the silencing of some transposable elements (TEs). Exhibits ATPase activity. May also be involved in the regulation of chromatin architecture/condensation to maintain gene silencing. Binds DNA/RNA in a non-specific manner and exhibits endonuclease activity. Probably involved in DNA repair. Positive regulator of defense against the oomycete Hyaloperonospora arabidopsidis (Hpa). The polypeptide is Protein MICRORCHIDIA 6 (Arabidopsis thaliana (Mouse-ear cress)).